We begin with the raw amino-acid sequence, 327 residues long: Glycerol-3-phosphate dehydrogenase [NAD(P)+] (327 aa).

Phenylalanine 13, arginine 34, and lysine 107 together coordinate NADPH. Positions 107 and 135 each coordinate sn-glycerol 3-phosphate. Alanine 139 contributes to the NADPH binding site. 5 residues coordinate sn-glycerol 3-phosphate: lysine 190, aspartate 243, serine 253, arginine 254, and asparagine 255. The active-site Proton acceptor is the lysine 190. Position 254 (arginine 254) interacts with NADPH. NADPH-binding residues include valine 276 and glutamate 277.

It belongs to the NAD-dependent glycerol-3-phosphate dehydrogenase family.

The protein resides in the cytoplasm. The enzyme catalyses sn-glycerol 3-phosphate + NAD(+) = dihydroxyacetone phosphate + NADH + H(+). It catalyses the reaction sn-glycerol 3-phosphate + NADP(+) = dihydroxyacetone phosphate + NADPH + H(+). Its pathway is membrane lipid metabolism; glycerophospholipid metabolism. Functionally, catalyzes the reduction of the glycolytic intermediate dihydroxyacetone phosphate (DHAP) to sn-glycerol 3-phosphate (G3P), the key precursor for phospholipid synthesis. This is Glycerol-3-phosphate dehydrogenase [NAD(P)+] from Rhizobium etli (strain ATCC 51251 / DSM 11541 / JCM 21823 / NBRC 15573 / CFN 42).